The primary structure comprises 459 residues: Argininosuccinate lyase (459 aa).

The protein belongs to the lyase 1 family. Argininosuccinate lyase subfamily.

It localises to the cytoplasm. The catalysed reaction is 2-(N(omega)-L-arginino)succinate = fumarate + L-arginine. It functions in the pathway amino-acid biosynthesis; L-arginine biosynthesis; L-arginine from L-ornithine and carbamoyl phosphate: step 3/3. This chain is Argininosuccinate lyase, found in Staphylococcus aureus (strain Mu3 / ATCC 700698).